Consider the following 550-residue polypeptide: Aldehyde dehydrogenase family 3 member I1, chloroplastic (550 aa).

The N-terminal 59 residues, methionine 1–leucine 59, are a transit peptide targeting the chloroplast. Glycine 259–alanine 264 serves as a coordination point for NAD(+). Glutamate 281 serves as the catalytic Proton acceptor. Cysteine 316 (nucleophile) is an active-site residue.

This sequence belongs to the aldehyde dehydrogenase family. As to quaternary structure, homodimer and homomultimer.

It is found in the plastid. Its subcellular location is the chloroplast. It carries out the reaction an aldehyde + NAD(+) + H2O = a carboxylate + NADH + 2 H(+). With respect to regulation, thiol-based regulation. Inactivation after dimerization under oxidizing conditions. Functionally, involved in oxidative stress tolerance by detoxifying reactive aldehydes derived from lipid peroxidation. Medium- to long-chain saturated aldehydes are preferred substrates, while the short-chain aldehyde propanal is a weak substrate. Can use both NAD(+) and NADP(+), but the coenzyme preference is substrate dependent. The sequence is that of Aldehyde dehydrogenase family 3 member I1, chloroplastic (ALDH3I1) from Arabidopsis thaliana (Mouse-ear cress).